A 1915-amino-acid chain; its full sequence is Protein TIC 214 (1915 aa).

The next 6 membrane-spanning stretches (helical) occupy residues 18-38 (IINSVVVVGLYYGFLTTFSIG), 64-84 (FITGQLMMFISIYYAPLHLAL), 90-110 (ITVLVLPYLLFHFFWHNHKYF), 126-146 (LNIQCVFLNNLIFPLFNHFIL), 174-194 (VGWLIGHILFMKWVELVLIWI), and 230-250 (IFSILLFITCIYYLGRMPSTL). Disordered regions lie at residues 260 to 319 (KMKQ…EIRV) and 1566 to 1631 (NKNI…GSVL). The span at 267 to 277 (SEEETDVEIET) shows a compositional bias: acidic residues. Over residues 279–288 (SETKETKEEQ) the composition is skewed to basic and acidic residues. Positions 304 to 315 (EKEDPDKIDETE) are enriched in acidic residues. Basic and acidic residues predominate over residues 1587-1601 (KSLELENRNQEEKES). Over residues 1602-1631 (SSQGDLGSNAQNQGNLGPNAQNQGNLGSVL) the composition is skewed to polar residues.

Belongs to the TIC214 family. As to quaternary structure, part of the Tic complex.

Its subcellular location is the plastid. The protein resides in the chloroplast inner membrane. Involved in protein precursor import into chloroplasts. May be part of an intermediate translocation complex acting as a protein-conducting channel at the inner envelope. This chain is Protein TIC 214, found in Platanus occidentalis (Sycamore).